We begin with the raw amino-acid sequence, 362 residues long: Atypical chemokine receptor 3 (362 aa).

Residues methionine 1–lysine 40 lie on the Extracellular side of the membrane. N-linked (GlcNAc...) asparagine glycosylation is found at asparagine 13, asparagine 22, and asparagine 39. The helical transmembrane segment at serine 41–alanine 61 threads the bilayer. Residues asparagine 62 to cysteine 81 lie on the Cytoplasmic side of the membrane. The chain crosses the membrane as a helical span at residues tyrosine 82–valine 102. Residues serine 103 to lysine 118 are Extracellular-facing. An intrachain disulfide couples cysteine 117 to cysteine 196. The helical transmembrane segment at valine 119–serine 139 threads the bilayer. The Cytoplasmic portion of the chain corresponds to valine 140 to arginine 162. The helical transmembrane segment at valine 163 to leucine 183 threads the bilayer. The Extracellular segment spans residues lysine 184 to glutamate 213. A helical transmembrane segment spans residues leucine 214–leucine 234. The Cytoplasmic segment spans residues leucine 235–lysine 252. A helical transmembrane segment spans residues isoleucine 253–leucine 273. The Extracellular segment spans residues leucine 274 to alanine 296. A helical transmembrane segment spans residues leucine 297 to asparagine 319. Over arginine 320–lysine 362 the chain is Cytoplasmic. Residues tyrosine 324–lysine 362 are C-terminal cytoplasmic tail. Serine 347, serine 350, and serine 355 each carry phosphoserine.

This sequence belongs to the G-protein coupled receptor 1 family. Atypical chemokine receptor subfamily. Homodimer. Can form heterodimers with CXCR4; heterodimerization may regulate CXCR4 signaling activity. Interacts with ARRB1 and ARRB2. Post-translationally, the Ser/Thr residues in the C-terminal cytoplasmic tail may be phosphorylated. In terms of processing, ubiquitinated at the Lys residues in its C-terminal cytoplasmic tail and is essential for correct trafficking from and to the cell membrane. Deubiquitinated by CXCL12-stimulation in a reversible manner. Expressed in monocytes, basophils, B-cells, umbilical vein endothelial cells (HUVEC) and B-lymphoblastoid cells. Lower expression detected in CD4+ T-lymphocytes and natural killer cells. In the brain, detected in endothelial cells and capillaries, and in mature neurons of the frontal cortex and hippocampus. Expressed in tubular formation in the kidney. Highly expressed in astroglial tumor endothelial, microglial and glioma cells. Expressed at low levels in normal CD34+ progenitor cells, but at very high levels in several myeloid malignant cell lines. Expressed in breast carcinomas but not in normal breast tissue (at protein level).

Its subcellular location is the cell membrane. The protein resides in the early endosome. It localises to the recycling endosome. Functionally, atypical chemokine receptor that controls chemokine levels and localization via high-affinity chemokine binding that is uncoupled from classic ligand-driven signal transduction cascades, resulting instead in chemokine sequestration, degradation, or transcytosis. Also known as interceptor (internalizing receptor) or chemokine-scavenging receptor or chemokine decoy receptor. Acts as a receptor for chemokines CXCL11 and CXCL12/SDF1. Chemokine binding does not activate G-protein-mediated signal transduction but instead induces beta-arrestin recruitment, leading to ligand internalization and activation of MAPK signaling pathway. Required for regulation of CXCR4 protein levels in migrating interneurons, thereby adapting their chemokine responsiveness. In glioma cells, transduces signals via MEK/ERK pathway, mediating resistance to apoptosis. Promotes cell growth and survival. Not involved in cell migration, adhesion or proliferation of normal hematopoietic progenitors but activated by CXCL11 in malignant hemapoietic cells, leading to phosphorylation of ERK1/2 (MAPK3/MAPK1) and enhanced cell adhesion and migration. Plays a regulatory role in CXCR4-mediated activation of cell surface integrins by CXCL12. Required for heart valve development. Regulates axon guidance in the oculomotor system through the regulation of CXCL12 levels. (Microbial infection) Acts as a coreceptor with CXCR4 for a restricted number of HIV isolates. The polypeptide is Atypical chemokine receptor 3 (Homo sapiens (Human)).